Reading from the N-terminus, the 385-residue chain is 1-deoxy-D-xylulose 5-phosphate reductoisomerase 1 (385 aa).

Thr-11, Gly-12, Ser-13, Ile-14, Asn-39, and Asn-122 together coordinate NADPH. Lys-123 serves as a coordination point for 1-deoxy-D-xylulose 5-phosphate. Residue Glu-124 coordinates NADPH. Asp-148 is a binding site for Mn(2+). 1-deoxy-D-xylulose 5-phosphate contacts are provided by Ser-149, Glu-150, Ser-174, and His-197. Glu-150 contacts Mn(2+). Gly-203 is a binding site for NADPH. Residues Ser-210, Asn-215, Lys-216, and Glu-219 each coordinate 1-deoxy-D-xylulose 5-phosphate. Glu-219 contacts Mn(2+).

It belongs to the DXR family. The cofactor is Mg(2+). Mn(2+) is required as a cofactor.

The catalysed reaction is 2-C-methyl-D-erythritol 4-phosphate + NADP(+) = 1-deoxy-D-xylulose 5-phosphate + NADPH + H(+). The protein operates within isoprenoid biosynthesis; isopentenyl diphosphate biosynthesis via DXP pathway; isopentenyl diphosphate from 1-deoxy-D-xylulose 5-phosphate: step 1/6. Functionally, catalyzes the NADPH-dependent rearrangement and reduction of 1-deoxy-D-xylulose-5-phosphate (DXP) to 2-C-methyl-D-erythritol 4-phosphate (MEP). The sequence is that of 1-deoxy-D-xylulose 5-phosphate reductoisomerase 1 from Bacillus cereus (strain ATCC 14579 / DSM 31 / CCUG 7414 / JCM 2152 / NBRC 15305 / NCIMB 9373 / NCTC 2599 / NRRL B-3711).